The sequence spans 1328 residues: Myb-binding protein 1A (1328 aa).

The disordered stretch occupies residues 1-22; the sequence is MESRDPAQPMSPGEATQSGARP. An interaction with MYB region spans residues 1-582; sequence MESRDPAQPM…WDRMLQTLKE (582 aa). Position 11 is a phosphoserine (Ser-11). Lys-71 and Lys-158 each carry N6-acetyllysine. Short sequence motifs (nuclear export signal) lie at residues 240–258 and 263–281; these read SDENVPRLVNVLKMAASSV and KLPAIALDLLRLALKEDKF. A disordered region spans residues 698–753; the sequence is SEDENDRVVVTDDSDERRLKGAEDKSEEGEDNRSSESEEESEGEESEEEERDGDVD. Basic and acidic residues predominate over residues 703–721; sequence DRVVVTDDSDERRLKGAED. Residues 734–752 show a composition bias toward acidic residues; that stretch reads SEEESEGEESEEEERDGDV. At Ser-775 the chain carries Phosphoserine. Residues 1146–1292 are disordered; sequence RPKLEKKDAK…KKGVLGKSPL (147 aa). Positions 1147–1156 are enriched in basic and acidic residues; sequence PKLEKKDAKE. Residue Lys-1148 forms a Glycyl lysine isopeptide (Lys-Gly) (interchain with G-Cter in SUMO2) linkage. Residues 1151-1328 form a required for nuclear and nucleolar localization region; sequence KKDAKEIPSA…KAQVRKAGKP (178 aa). Ser-1159 and Ser-1163 each carry phosphoserine. The span at 1166-1184 shows a compositional bias: basic residues; it reads SKKRKKKGFLPETKKRKKR. Ser-1186 bears the Phosphoserine mark. Residues Thr-1190 and Thr-1196 each carry the phosphothreonine modification. The residue at position 1207 (Ser-1207) is a Phosphoserine. The segment covering 1209 to 1218 has biased composition (basic residues); the sequence is GRKKRNRTKA. Ser-1232 bears the Phosphoserine mark. Position 1239 is a phosphothreonine (Thr-1239). A Phosphoserine modification is found at Ser-1241. Thr-1244 bears the Phosphothreonine mark. Residues Ser-1248 and Ser-1267 each carry the phosphoserine modification. Thr-1269 carries the phosphothreonine modification. Phosphoserine is present on residues Ser-1290 and Ser-1303. Residues 1306–1328 are disordered; sequence IRSPSLLQSGAKKKAQVRKAGKP. A Citrulline modification is found at Arg-1307. 3 positions are modified to phosphoserine: Ser-1308, Ser-1310, and Ser-1314. Over residues 1316–1328 the composition is skewed to basic residues; it reads AKKKAQVRKAGKP.

Belongs to the MYBBP1A family. In terms of assembly, binds to and represses JUN and MYB via the leucine zipper regions present in these proteins. Also binds to and represses PPARGC1A: this interaction is abrogated when PPARGC1A is phosphorylated by MAPK1/ERK. Binds to and stimulates transcription by AHR. Binds to KPNA2. Interacts with CLOCK and CRY1. Component of the B-WICH complex, at least composed of SMARCA5/SNF2H, BAZ1B/WSTF, SF3B1, DEK, MYO1C, ERCC6, MYBBP1A and DDX21. In terms of processing, citrullinated by PADI4.

The protein localises to the cytoplasm. The protein resides in the nucleus. It is found in the nucleolus. May activate or repress transcription via interactions with sequence specific DNA-binding proteins. Repression may be mediated at least in part by histone deacetylase activity (HDAC activity). Acts as a corepressor and in concert with CRY1, represses the transcription of the core circadian clock component PER2. Preferentially binds to dimethylated histone H3 'Lys-9' (H3K9me2) on the PER2 promoter. Has a role in rRNA biogenesis together with PWP1. In Homo sapiens (Human), this protein is Myb-binding protein 1A (MYBBP1A).